Consider the following 346-residue polypeptide: Small ribosomal subunit biogenesis GTPase RsgA (346 aa).

One can recognise a CP-type G domain in the interval 98 to 261; sequence VQGGRGPQLA…VIDTPGMRTL (164 aa). GTP contacts are provided by residues 148–151 and 200–208; these read TKAD and GSSGVGKST. Zn(2+)-binding residues include cysteine 284, cysteine 289, histidine 291, and cysteine 297. The segment at 317–346 is disordered; it reads RKLSDENQHNTPVQSGPRGAKSPAGRGKRR.

The protein belongs to the TRAFAC class YlqF/YawG GTPase family. RsgA subfamily. Monomer. Associates with 30S ribosomal subunit, binds 16S rRNA. Zn(2+) serves as cofactor.

Its subcellular location is the cytoplasm. In terms of biological role, one of several proteins that assist in the late maturation steps of the functional core of the 30S ribosomal subunit. Helps release RbfA from mature subunits. May play a role in the assembly of ribosomal proteins into the subunit. Circularly permuted GTPase that catalyzes slow GTP hydrolysis, GTPase activity is stimulated by the 30S ribosomal subunit. This is Small ribosomal subunit biogenesis GTPase RsgA from Mesorhizobium japonicum (strain LMG 29417 / CECT 9101 / MAFF 303099) (Mesorhizobium loti (strain MAFF 303099)).